The chain runs to 141 residues: Oleosin 14.9 kDa (141 aa).

Over residues 1 to 22 (MADQTRTHHEMISRDSTQEAHP) the composition is skewed to basic and acidic residues. A disordered region spans residues 1–24 (MADQTRTHHEMISRDSTQEAHPKA). The interval 1 to 29 (MADQTRTHHEMISRDSTQEAHPKARQMVK) is polar. Positions 30 to 141 (AATAVTAGGS…NIGVQHQQVS (112 aa)) are hydrophobic. The next 3 helical transmembrane spans lie at 38–58 (GSLL…LTVA), 60–80 (PLLV…ALII), and 81–101 (TGFL…SWLY).

It belongs to the oleosin family.

The protein resides in the lipid droplet. The protein localises to the membrane. May have a structural role to stabilize the lipid body during desiccation of the seed by preventing coalescence of the oil. Probably interacts with both lipid and phospholipid moieties of lipid bodies. May also provide recognition signals for specific lipase anchorage in lipolysis during seedling growth. The sequence is that of Oleosin 14.9 kDa (OL3) from Arabidopsis thaliana (Mouse-ear cress).